We begin with the raw amino-acid sequence, 407 residues long: Succinate--CoA ligase [ADP-forming] subunit beta, hydrogenosomal (407 aa).

Residues 1 to 9 (MLSSSFARN) constitute a hydrogenosome transit peptide. Positions 18 to 261 (KEICAKYNVA…LKQVNPFEIR (244 aa)) constitute an ATP-grasp domain. Residues K55, 62–64 (GRG), and E124 contribute to the ATP site. Mg(2+) is bound by residues N216 and D230. Residues N281 and 338 to 340 (GIV) each bind substrate.

This sequence belongs to the succinate/malate CoA ligase beta subunit family. As to quaternary structure, heterodimer of an alpha and a beta subunit. Mg(2+) is required as a cofactor.

Its subcellular location is the hydrogenosome. The enzyme catalyses succinate + ATP + CoA = succinyl-CoA + ADP + phosphate. It functions in the pathway carbohydrate metabolism; tricarboxylic acid cycle; succinate from succinyl-CoA (ligase route): step 1/1. Succinyl-CoA synthetase functions in the citric acid cycle (TCA), coupling the hydrolysis of succinyl-CoA to the synthesis of ATP and thus represents the only step of substrate-level phosphorylation in the TCA. The beta subunit provides nucleotide specificity of the enzyme and binds the substrate succinate, while the binding sites for coenzyme A and phosphate are found in the alpha subunit. The chain is Succinate--CoA ligase [ADP-forming] subunit beta, hydrogenosomal from Trichomonas vaginalis.